The primary structure comprises 196 residues: Large ribosomal subunit protein mL66 (196 aa).

Residues 1-34 constitute a mitochondrion transit peptide; sequence MAALKALVSGCGRLLRGLLAGPAATSWSRLPARG.

The protein belongs to the bacterial ribosomal protein bS18 family. Mitochondrion-specific ribosomal protein mL66 subfamily. In terms of assembly, component of the mitochondrial large ribosomal subunit (mt-LSU). Mature mammalian 55S mitochondrial ribosomes consist of a small (28S) and a large (39S) subunit. The 28S small subunit contains a 12S ribosomal RNA (12S mt-rRNA) and 30 different proteins. The 39S large subunit contains a 16S rRNA (16S mt-rRNA), a copy of mitochondrial valine transfer RNA (mt-tRNA(Val)), which plays an integral structural role, and 52 different proteins. mL66 forms a zinc-binding site with uL10m.

The protein resides in the mitochondrion. In Homo sapiens (Human), this protein is Large ribosomal subunit protein mL66 (MRPS18A).